The primary structure comprises 746 residues: tRNA (cytosine(34)-C(5))-methyltransferase (746 aa).

The disordered stretch occupies residues 1 to 30 (MGRNQKQNFFAARKRQKRENGPKRTDRQAQ). Residues 18-30 (RENGPKRTDRQAQ) show a composition bias toward basic and acidic residues. S-adenosyl-L-methionine is bound by residues 184–190 (CAAPGSK), Asp-216, Asp-243, and Asp-270. The active-site Nucleophile is the Cys-323. 2 disordered regions span residues 454–475 (QPAAEPQVDADGKPIEEKSVPW) and 701–746 (SAEA…VATS). Residues 463 to 472 (ADGKPIEEKS) are compositionally biased toward basic and acidic residues. The span at 704-714 (AEADSSGDGDA) shows a compositional bias: acidic residues. The span at 731-746 (AETTGTPMDTEVVATS) shows a compositional bias: polar residues.

Belongs to the class I-like SAM-binding methyltransferase superfamily. RsmB/NOP family. TRM4 subfamily. Ubiquitously expressed during embryonic development. Some enrichment is observed in the proventriculus area of the foregut and in the hindgut.

Its subcellular location is the nucleus. It is found in the nucleolus. It catalyses the reaction cytidine(34) in tRNA precursor + S-adenosyl-L-methionine = 5-methylcytidine(34) in tRNA precursor + S-adenosyl-L-homocysteine + H(+). RNA methyltransferase that methylates tRNAs. Methylates cytosine to 5-methylcytosine (m5C) at position 34 of intron-containing tRNA(Leu)(CAA) precursors. Required for short-term memory. This Drosophila melanogaster (Fruit fly) protein is tRNA (cytosine(34)-C(5))-methyltransferase.